Consider the following 130-residue polypeptide: Small ribosomal subunit protein uS8 (130 aa).

Belongs to the universal ribosomal protein uS8 family. Part of the 30S ribosomal subunit. Contacts proteins S5 and S12.

Functionally, one of the primary rRNA binding proteins, it binds directly to 16S rRNA central domain where it helps coordinate assembly of the platform of the 30S subunit. The chain is Small ribosomal subunit protein uS8 from Shewanella sp. (strain MR-7).